The primary structure comprises 240 residues: Putative exosome complex component RRP41 (240 aa).

It belongs to the RNase PH family. As to quaternary structure, component of the RNA exosome complex.

It localises to the cytoplasm. The protein localises to the nucleus. The protein resides in the nucleolus. It is found in the nucleoplasm. In terms of biological role, non-catalytic component of the RNA exosome complex which has 3'-&gt;5' exoribonuclease activity and participates in a multitude of cellular RNA processing and degradation events. This chain is Putative exosome complex component RRP41 (exos-4.1), found in Caenorhabditis elegans.